A 119-amino-acid chain; its full sequence is uncharacterized protein (119 aa).

Residues 80 to 104 (VFPLVYLFCVVFQFLSLGCYLSIFF) form a helical membrane-spanning segment.

Its subcellular location is the membrane. This is an uncharacterized protein from Saccharomyces cerevisiae (strain ATCC 204508 / S288c) (Baker's yeast).